Reading from the N-terminus, the 367-residue chain is Beta sliding clamp (367 aa).

The protein belongs to the beta sliding clamp family. Forms a ring-shaped head-to-tail homodimer around DNA which binds and tethers DNA polymerases and other proteins to the DNA. The DNA replisome complex has a single clamp-loading complex (3 tau and 1 each of delta, delta', psi and chi subunits) which binds 3 Pol III cores (1 core on the leading strand and 2 on the lagging strand) each with a beta sliding clamp dimer. Additional proteins in the replisome are other copies of gamma, psi and chi, Ssb, DNA helicase and RNA primase.

Its subcellular location is the cytoplasm. Functionally, confers DNA tethering and processivity to DNA polymerases and other proteins. Acts as a clamp, forming a ring around DNA (a reaction catalyzed by the clamp-loading complex) which diffuses in an ATP-independent manner freely and bidirectionally along dsDNA. Initially characterized for its ability to contact the catalytic subunit of DNA polymerase III (Pol III), a complex, multichain enzyme responsible for most of the replicative synthesis in bacteria; Pol III exhibits 3'-5' exonuclease proofreading activity. The beta chain is required for initiation of replication as well as for processivity of DNA replication. The chain is Beta sliding clamp (dnaN) from Pseudomonas aeruginosa (strain ATCC 15692 / DSM 22644 / CIP 104116 / JCM 14847 / LMG 12228 / 1C / PRS 101 / PAO1).